Here is a 977-residue protein sequence, read N- to C-terminus: Mineralocorticoid receptor (977 aa).

A compositionally biased stretch (basic and acidic residues) spans 1–19 (METKGYHSRPEGLDMERRW). 2 disordered regions span residues 1-37 (METKGYHSRPEGLDMERRWGQVSQPVDRPSLGPAERT) and 231-288 (QGTP…VSSP). Positions 1–601 (METKGYHSRP…STGSSRPSKI (601 aa)) are modulating. Positions 231-243 (QGTPLTCSPTVDN) are enriched in polar residues. Serine 250, serine 259, serine 283, serine 287, and serine 299 each carry phosphoserine. Over residues 259–288 (SPLSSPLSSMKSPISSPPSHCSVKSPVSSP) the composition is skewed to low complexity. Disordered stretches follow at residues 305-327 (NSRCSVSSPSKANNRSTLSSPAA) and 344-368 (SGASVGSSATRDVIPSPDTHEKGAH). Zn(2+) is bound by residues cysteine 602, cysteine 605, cysteine 619, cysteine 622, cysteine 638, cysteine 644, cysteine 654, and cysteine 657. 2 consecutive NR C4-type zinc fingers follow at residues 602-622 (CLVCGDGASGCHYGVVTCGSC) and 638-662 (CAGRNDCIIDKIRRKNCPACRLQKC). Residues 602 to 667 (CLVCGDGASG…RLQKCLQAGM (66 aa)) constitute a DNA-binding region (nuclear receptor). A hinge region spans residues 668-718 (NLGARKSKKLGKLKGLHEEQPQQPPPPQSPEEGTTYIAPAKEPSVNTALVP). A disordered region spans residues 682-703 (GLHEEQPQQPPPPQSPEEGTTY). One can recognise an NR LBD domain in the interval 719–957 (QLSSISRALT…EFPAMLVEII (239 aa)). The 21-hydroxyprogesterone site is built by asparagine 763 and glutamine 769. Aldosterone contacts are provided by asparagine 763 and glutamine 769. The progesterone site is built by asparagine 763 and glutamine 769. The important for coactivator binding stretch occupies residues 775–778 (KWAK). Arginine 810 and threonine 938 together coordinate 21-hydroxyprogesterone. Residues arginine 810 and threonine 938 each contribute to the aldosterone site. Progesterone is bound by residues arginine 810 and threonine 938.

Belongs to the nuclear hormone receptor family. NR3 subfamily.

It is found in the cytoplasm. Its subcellular location is the nucleus. Its function is as follows. Receptor for both mineralocorticoids (MC) such as aldosterone and glucocorticoids (GC) such as corticosterone or cortisol. Binds to mineralocorticoid response elements (MRE) and transactivates target genes. The effect of MC is to increase ion and water transport and thus raise extracellular fluid volume and blood pressure and lower potassium levels. This chain is Mineralocorticoid receptor (NR3C2), found in Tupaia belangeri (Common tree shrew).